Consider the following 404-residue polypeptide: Pre-heme d1 synthase (404 aa).

Residues 22-235 form the Radical SAM core domain; it reads GTPKPVVIWN…LIARALESAE (214 aa). Residues C36, C40, C43, C340, C343, C349, and C371 each coordinate [4Fe-4S] cluster.

Belongs to the radical SAM superfamily. [4Fe-4S] cluster is required as a cofactor.

The protein operates within porphyrin-containing compound metabolism. Involved in heme d1 biosynthesis. Radical SAM enzyme that catalyzes the removal of two propionate side chains from the intermediate 12,18-didecarboxysiroheme (DDSH) and may introduce the keto functions on rings A and B, yielding the heme d1 precursor dihydro-heme d1. In Dinoroseobacter shibae (strain DSM 16493 / NCIMB 14021 / DFL 12), this protein is Pre-heme d1 synthase.